A 32-amino-acid polypeptide reads, in one-letter code: Photosystem II reaction center protein T (32 aa).

A helical transmembrane segment spans residues 3–23 (ALVYTFLLIGTLIVIFFAVFF).

Belongs to the PsbT family. In terms of assembly, PSII is composed of 1 copy each of membrane proteins PsbA, PsbB, PsbC, PsbD, PsbE, PsbF, PsbH, PsbI, PsbJ, PsbK, PsbL, PsbM, PsbT, PsbX, PsbY, PsbZ, Psb30/Ycf12, at least 3 peripheral proteins of the oxygen-evolving complex and a large number of cofactors. It forms dimeric complexes.

The protein localises to the plastid. The protein resides in the chloroplast thylakoid membrane. In terms of biological role, found at the monomer-monomer interface of the photosystem II (PS II) dimer, plays a role in assembly and dimerization of PSII. PSII is a light-driven water plastoquinone oxidoreductase, using light energy to abstract electrons from H(2)O, generating a proton gradient subsequently used for ATP formation. The chain is Photosystem II reaction center protein T from Phaeodactylum tricornutum (strain CCAP 1055/1).